Consider the following 326-residue polypeptide: tRNA uridine(34) hydroxylase (326 aa).

The Rhodanese domain occupies 123–217 (SDPDVLLVDT…YLEEVKQEES (95 aa)). The active-site Cysteine persulfide intermediate is the cysteine 177. Positions 304–326 (VSQVILSRRTEKEDQRQAQNKKA) are disordered.

It belongs to the TrhO family.

The catalysed reaction is uridine(34) in tRNA + AH2 + O2 = 5-hydroxyuridine(34) in tRNA + A + H2O. Its function is as follows. Catalyzes oxygen-dependent 5-hydroxyuridine (ho5U) modification at position 34 in tRNAs. This is tRNA uridine(34) hydroxylase from Shewanella sediminis (strain HAW-EB3).